We begin with the raw amino-acid sequence, 154 residues long: SsrA-binding protein (154 aa).

The protein belongs to the SmpB family.

Its subcellular location is the cytoplasm. Its function is as follows. Required for rescue of stalled ribosomes mediated by trans-translation. Binds to transfer-messenger RNA (tmRNA), required for stable association of tmRNA with ribosomes. tmRNA and SmpB together mimic tRNA shape, replacing the anticodon stem-loop with SmpB. tmRNA is encoded by the ssrA gene; the 2 termini fold to resemble tRNA(Ala) and it encodes a 'tag peptide', a short internal open reading frame. During trans-translation Ala-aminoacylated tmRNA acts like a tRNA, entering the A-site of stalled ribosomes, displacing the stalled mRNA. The ribosome then switches to translate the ORF on the tmRNA; the nascent peptide is terminated with the 'tag peptide' encoded by the tmRNA and targeted for degradation. The ribosome is freed to recommence translation, which seems to be the essential function of trans-translation. This chain is SsrA-binding protein, found in Solidesulfovibrio magneticus (strain ATCC 700980 / DSM 13731 / RS-1) (Desulfovibrio magneticus).